Consider the following 321-residue polypeptide: Lactamase-like protein notP (321 aa).

Zn(2+) contacts are provided by H108, H110, D112, and H113. D112 functions as the Proton donor/acceptor in the catalytic mechanism.

The protein belongs to the metallo-beta-lactamase superfamily. Zn(2+) serves as cofactor.

In terms of biological role, lactamase-like protein; part of the gene cluster that mediates the biosynthesis of notoamide, a fungal indole alkaloid that belongs to a family of natural products containing a characteristic bicyclo[2.2.2]diazaoctane core. The first step of notoamide biosynthesis involves coupling of L-proline and L-tryptophan by the bimodular NRPS notE, to produce cyclo-L-tryptophan-L-proline called brevianamide F. The reverse prenyltransferase notF then acts as a deoxybrevianamide E synthase and converts brevianamide F to deoxybrevianamide E via reverse prenylation at C-2 of the indole ring leading to the bicyclo[2.2.2]diazaoctane core. Deoxybrevianamide E is further hydroxylated at C-6 of the indole ring, likely catalyzed by the cytochrome P450 monooxygenase notG, to yield 6-hydroxy-deoxybrevianamide E. 6-hydroxy-deoxybrevianamide E is a specific substrate of the prenyltransferase notC for normal prenylation at C-7 to produce 6-hydroxy-7-prenyl-deoxybrevianamide, also called notoamide S. As the proposed pivotal branching point in notoamide biosynthesis, notoamide S can be diverted to notoamide E through an oxidative pyran ring closure putatively catalyzed by either notH cytochrome P450 monooxygenase or the notD FAD-linked oxidoreductase. This step would be followed by an indole 2,3-epoxidation-initiated pinacol-like rearrangement catalyzed by the notB FAD-dependent monooxygenase leading to the formation of notoamide C and notoamide D. On the other hand notoamide S is converted to notoamide T by notH (or notD), a bifunctional oxidase that also functions as the intramolecular Diels-Alderase responsible for generation of (+)-notoamide T. To generate antipodal (-)-notoaminide T, notH' (or notD') in Aspergillus versicolor is expected to catalyze a Diels-Alder reaction leading to the opposite stereochemistry. The remaining oxidoreductase notD (or notH) likely catalyzes the oxidative pyran ring formation to yield (+)-stephacidin A. The FAD-dependent monooxygenase notI is highly similar to notB and is predicted to catalyze a similar conversion from (+)-stephacidin A to (-)-notoamide B via the 2,3-epoxidation of (+)-stephacidin A followed by a pinacol-type rearrangement. Finally, it remains unclear which enzyme could be responsible for the final hydroxylation steps leading to notoamide A and sclerotiamide. The function of notP in the notoamide biosynthesis has not been determined yet. In Aspergillus sp. (strain MF297-2), this protein is Lactamase-like protein notP.